Reading from the N-terminus, the 397-residue chain is Elongation factor Tu (397 aa).

In terms of domain architecture, tr-type G spans 10–206 (KPHCNIGTIG…TIDEYVPDPE (197 aa)). Residues 19-26 (GHVDHGKT) are G1. 19–26 (GHVDHGKT) is a GTP binding site. Thr-26 contacts Mg(2+). Positions 61–65 (GITIS) are G2. Positions 82 to 85 (DCPG) are G3. Residues 82 to 86 (DCPGH) and 137 to 140 (NKCD) each bind GTP. Positions 137–140 (NKCD) are G4. The interval 175–177 (SAL) is G5.

It belongs to the TRAFAC class translation factor GTPase superfamily. Classic translation factor GTPase family. EF-Tu/EF-1A subfamily. Monomer.

It localises to the cytoplasm. It carries out the reaction GTP + H2O = GDP + phosphate + H(+). Functionally, GTP hydrolase that promotes the GTP-dependent binding of aminoacyl-tRNA to the A-site of ribosomes during protein biosynthesis. In Lachnospira eligens (strain ATCC 27750 / DSM 3376 / VPI C15-48 / C15-B4) (Eubacterium eligens), this protein is Elongation factor Tu.